The following is a 481-amino-acid chain: Protein DETOXIFICATION 12 (481 aa).

The next 12 helical transmembrane spans lie at 38 to 58 (LIFF…LQIV), 76 to 96 (LASS…SCAL), 117 to 137 (YTAM…WFNM), 154 to 174 (AGKY…LQPL), 187 to 207 (LLIT…FLVY), 214 to 234 (LGGA…LGSF), 267 to 287 (AAMI…SGLL), 296 to 316 (VLSV…AIAA), 336 to 356 (IVVY…SMSL), 380 to 400 (MAPL…LSGI), 415 to 435 (LGAF…WIHL), and 438 to 458 (VGLW…LALV).

This sequence belongs to the multi antimicrobial extrusion (MATE) (TC 2.A.66.1) family.

The protein localises to the membrane. This is Protein DETOXIFICATION 12 from Arabidopsis thaliana (Mouse-ear cress).